A 1205-amino-acid chain; its full sequence is MNFEGLDPGLAEFSPAMHSTLDPVLDAHLNPSLLQNVELDPEGVALEALPVQESVHIMEGVYSELHSVVAEVGVPVSVSHFDLQEEMLWVGSHGGHATSFFGPALERYSSFQVNGSDDIRQIQSLENGILFLTKNNLKYMARGGLIIFDYLLDESEDMHSLLLADNNTLLVGGLQNHVLEIDLNTVQETQKYAVETPGVTIMRQTNRFFFCGHTSGKVSLRDLRSFKVEHEFDAFSGSLSDFDVHGNLLAACGFSSRLTGLACDRFLKVYDLRMMRAITPLQVHVDPAFLRFIPTYTSRLAIISQSGQCQFCEPTGLANPADIFHVNPVGPLLMTFDVSASKQALAFGDSEGCVHLWTDSPEPSFNPYSRETEFALPCLVDSLPALDWSQDLLPLSLIPVPLTTDALLSDWPAANSAPAPRRAPPVDAEILRTMKKVGFIGYAPNPRTRLRNQIPYRLKESDHEFDNFSQVTESPTGREEEPLHTVSKKYRKVTIKYSKLGLEDFDFKHYNKTLFAGLEPHIPNAYCNCMIQVLYFLEPVRCLIQNHLCQKEFCLACELGFLFHMLDLSRGDPCQGSNFLRAFRTIPEASALGLILADSDEASGKGSLARLIQRWNRFILTQLHQDMQELEVPQAYRGAGGSFCSSGDSIIGQLFSCEMENCSLCRCGSETVRASSTLLFTLSYPEDKTGKNYDFAQVLKRSICLEQNTQAWCDSCEKYQPTIQTRNIRHLPDILVINCEVNSSKEADFWRLQAEVAFKIAVKKFGGEVKSKEFALADRKELRSPEGFLCCSSMEELKNVWLPFSIRMKMTKNKGLDVCNWADEHELSSLGTPSQWGPARAEEEHGVYVYDLMATVVHILDSRTGGSLVAHIKVGETYHQRKEGVTHQQWYLFNDFLIEPIDKYEAVQFDMNWKVPAILYYVKRNLNSRYNLNSKNPIEASVLLAEASLARKQRKTHTTFIPLMLNEMPQVGDLVGLDAEFVTLNEEEAELRSDGTKSTIKPSQMSVARITCVRGQGPNEGIPFIDDYISTQEQVVDYLTQYSGIKPGDLDAKISSKHLTTLKSTYLKLRFLIDIGVKFVGHGLQKDFRVINLMVPKDQVLDTVYLFHMPRKRMISLRFLAWYFLDLKIQGETHDSIEDARTALQLYRKYLELSKNGAEPESFHKVLKGLYEKGRKMDWKVPEPESQSSPKSKAGLRPGALGWVG.

WD repeat units follow at residues 153 to 193, 195 to 231, 244 to 280, and 328 to 367; these read DESE…QKYA, ETPG…VEHE, VHGN…AITP, and PVGP…SFNP. Residues 368-484 form a linker region; it reads YSRETEFALP…PTGREEEPLH (117 aa). The USP domain maps to 485 to 924; that stretch reads TVSKKYRKVT…VPAILYYVKR (440 aa). Serine 784 carries the phosphoserine modification. The 173-residue stretch at 975-1147 folds into the Exonuclease domain; it reads VGLDAEFVTL…EDARTALQLY (173 aa). 4 residues coordinate a divalent metal cation: aspartate 978, glutamate 980, aspartate 1087, and aspartate 1139. The segment at 1179-1205 is disordered; that stretch reads WKVPEPESQSSPKSKAGLRPGALGWVG. A compositionally biased stretch (low complexity) spans 1184-1193; the sequence is PESQSSPKSK. Serine 1189 carries the phosphoserine modification.

Belongs to the peptidase C19 family. PAN2 subfamily. Forms a heterotrimer with an asymmetric homodimer of the regulatory subunit PAN3 to form the poly(A)-nuclease (PAN) deadenylation complex. Interacts with PAN3 isoform 1/Pan3L and isoform 3/Pan3S. Interacts with ZFP36. A divalent metal cation serves as cofactor.

It localises to the cytoplasm. It is found in the P-body. Its subcellular location is the nucleus. The enzyme catalyses Exonucleolytic cleavage of poly(A) to 5'-AMP.. With respect to regulation, positively regulated by the regulatory subunit PAN3. Its function is as follows. Catalytic subunit of the poly(A)-nuclease (PAN) deadenylation complex, one of two cytoplasmic mRNA deadenylases involved in general and miRNA-mediated mRNA turnover. PAN specifically shortens poly(A) tails of RNA and the activity is stimulated by poly(A)-binding protein (PABP). PAN deadenylation is followed by rapid degradation of the shortened mRNA tails by the CCR4-NOT complex. Deadenylated mRNAs are then degraded by two alternative mechanisms, namely exosome-mediated 3'-5' exonucleolytic degradation, or deadenylation-dependent mRNA decaping and subsequent 5'-3' exonucleolytic degradation by XRN1. Also acts as an important regulator of the HIF1A-mediated hypoxic response. Required for HIF1A mRNA stability independent of poly(A) tail length regulation. The protein is PAN2-PAN3 deadenylation complex catalytic subunit Pan2 of Rattus norvegicus (Rat).